The chain runs to 357 residues: S-adenosylmethionine:tRNA ribosyltransferase-isomerase (357 aa).

The protein belongs to the QueA family. As to quaternary structure, monomer.

It is found in the cytoplasm. It carries out the reaction 7-aminomethyl-7-carbaguanosine(34) in tRNA + S-adenosyl-L-methionine = epoxyqueuosine(34) in tRNA + adenine + L-methionine + 2 H(+). It participates in tRNA modification; tRNA-queuosine biosynthesis. Functionally, transfers and isomerizes the ribose moiety from AdoMet to the 7-aminomethyl group of 7-deazaguanine (preQ1-tRNA) to give epoxyqueuosine (oQ-tRNA). This chain is S-adenosylmethionine:tRNA ribosyltransferase-isomerase, found in Proteus mirabilis (strain HI4320).